Here is a 238-residue protein sequence, read N- to C-terminus: Riboflavin-binding protein (238 aa).

A signal peptide spans 1–17 (MLRFAITLFAVITSSTC). Pyrrolidone carboxylic acid is present on Gln-18. Cystine bridges form between Cys-22-Cys-49, Cys-41-Cys-90, Cys-50-Cys-94, Cys-74-Cys-155, Cys-81-Cys-127, Cys-116-Cys-186, Cys-120-Cys-169, Cys-133-Cys-151, and Cys-184-Cys-219. N-linked (GlcNAc...) asparagine glycosylation is present at Asn-53. N-linked (GlcNAc...) asparagine glycosylation is present at Asn-164. Residues Ser-204, Ser-205, Ser-208, Ser-209, Ser-210, Ser-212, Ser-213, and Ser-214 each carry the phosphoserine modification.

It belongs to the folate receptor family. Post-translationally, plasma and yolk RBPS have the same carbohydrate components, whereas egg-white RBP has a different, ovomucoid-type carbohydrate chain. Plasma RBP has the same C-terminal sequence as the egg-white RBP, which suggests that the C-terminal residues are cleaved off upon incorporation into the oocyte. In terms of tissue distribution, yolk RBP is synthesized in the liver; egg-white RBP is synthesized in the oviduct.

Its function is as follows. Required for the transport of riboflavin to the developing oocyte. The polypeptide is Riboflavin-binding protein (Gallus gallus (Chicken)).